Consider the following 348-residue polypeptide: Putative [LysW]-L-2-aminoadipate/[LysW]-L-glutamate phosphate reductase (348 aa).

9–12 (SGYV) is a binding site for NADP(+). Residue C149 is part of the active site. Position 315 (N315) interacts with NADP(+).

The protein belongs to the NAGSA dehydrogenase family. Type 1 subfamily. LysY sub-subfamily.

The protein localises to the cytoplasm. The catalysed reaction is [amino-group carrier protein]-C-terminal-N-(1-carboxy-5-oxopentan-1-yl)-L-glutamine + phosphate + NADP(+) = [amino-group carrier protein]-C-terminal-N-(1-carboxy-5-phosphooxy-5-oxopentan-1-yl)-L-glutamine + NADPH + H(+). The enzyme catalyses [amino-group carrier protein]-C-terminal-gamma-(L-glutamyl-5-semialdehyde)-L-glutamate + phosphate + NADP(+) = [amino-group carrier protein]-C-terminal-gamma-(5-phospho-L-glutamyl)-L-glutamate + NADPH + H(+). The protein operates within amino-acid biosynthesis; L-lysine biosynthesis via AAA pathway; L-lysine from L-alpha-aminoadipate (Thermus route): step 3/5. Its pathway is amino-acid biosynthesis; L-arginine biosynthesis. Functionally, involved in both the arginine and lysine biosynthetic pathways. This is Putative [LysW]-L-2-aminoadipate/[LysW]-L-glutamate phosphate reductase from Cenarchaeum symbiosum (strain A).